The sequence spans 132 residues: Z-ring associated protein G (132 aa).

The chain crosses the membrane as a helical span at residues M1–M21. Positions F95 to D132 are disordered.

The protein belongs to the ZapG family.

Its subcellular location is the cell inner membrane. Functionally, involved in cell division, cell envelope biogenesis and cell shape maintenance. In Escherichia coli O157:H7, this protein is Z-ring associated protein G.